A 446-amino-acid chain; its full sequence is Probable arogenate/prephenate dehydrogenase (446 aa).

Residues 6 to 288 (LTISIIGGTD…SEAKRGAYYS (283 aa)) enclose the Prephenate/arogenate dehydrogenase domain.

The protein in the N-terminal section; belongs to the prephenate/arogenate dehydrogenase family.

The chain is Probable arogenate/prephenate dehydrogenase from Methanocaldococcus jannaschii (strain ATCC 43067 / DSM 2661 / JAL-1 / JCM 10045 / NBRC 100440) (Methanococcus jannaschii).